The sequence spans 373 residues: Flagellar P-ring protein (373 aa).

Positions 1 to 30 (MTNRWSFDVKKNLVTLILTWLCLSISTAQA) are cleaved as a signal peptide.

It belongs to the FlgI family. As to quaternary structure, the basal body constitutes a major portion of the flagellar organelle and consists of four rings (L,P,S, and M) mounted on a central rod.

It localises to the periplasm. Its subcellular location is the bacterial flagellum basal body. Its function is as follows. Assembles around the rod to form the L-ring and probably protects the motor/basal body from shearing forces during rotation. The polypeptide is Flagellar P-ring protein (Aliivibrio salmonicida (strain LFI1238) (Vibrio salmonicida (strain LFI1238))).